Reading from the N-terminus, the 312-residue chain is Ribosomal protein L11 methyltransferase (312 aa).

S-adenosyl-L-methionine is bound by residues T160, G181, D203, and N246.

The protein belongs to the methyltransferase superfamily. PrmA family.

The protein localises to the cytoplasm. It catalyses the reaction L-lysyl-[protein] + 3 S-adenosyl-L-methionine = N(6),N(6),N(6)-trimethyl-L-lysyl-[protein] + 3 S-adenosyl-L-homocysteine + 3 H(+). Functionally, methylates ribosomal protein L11. This is Ribosomal protein L11 methyltransferase from Staphylococcus carnosus (strain TM300).